Here is a 722-residue protein sequence, read N- to C-terminus: Transmembrane channel-like protein 8 (722 aa).

The tract at residues 1-21 is disordered; sequence MFRQWSVQSGPAPRRPESQAA. The Cytoplasmic portion of the chain corresponds to 1-118; the sequence is MFRQWSVQSG…GIQSYFTFLR (118 aa). Residues Ser-6 and Ser-18 each carry the phosphoserine modification. Residues 119–139 form a helical membrane-spanning segment; it reads FLLLLNLLTMLLTACFVLLPL. Topologically, residues 140-204 are lumenal; that stretch reads VWLRPPELGP…AGPESSSEYS (65 aa). N-linked (GlcNAc...) asparagine glycosylation is present at Asn-184. Residues 205–225 traverse the membrane as a helical segment; it reads IRLAYLLSPMVCLLLCFCGIL. Residues 226-307 are Cytoplasmic-facing; that stretch reads QRMAEGLPQQ…CRLLTYLRTN (82 aa). Residues 308-328 form a helical membrane-spanning segment; it reads ILIVLLVVGAISAIFWATKYS. The Lumenal portion of the chain corresponds to 329-375; it reads QDNKEESLFLVLQYLPPGVISLVNFLGPQLFTVLIQLENYPPGTEVN. The tract at residues 366-534 is TMC domain; that stretch reads ENYPPGTEVN…SPRRFRASSS (169 aa). An N-linked (GlcNAc...) asparagine glycan is attached at Asn-375. The helical transmembrane segment at 376–396 threads the bilayer; the sequence is LTLIWCVVLKLASLGMFSFSL. The Cytoplasmic portion of the chain corresponds to 397–430; it reads GQTVLCIGRNKTSCESYGYNACDYQCWENSVGEE. Residues 431–451 traverse the membrane as a helical segment; sequence LYKLIIFNFLLTVAFAFLVSL. At 452–492 the chain is on the lumenal side; sequence PRRLLVERFSGWFWTWLDREEFLVPKNVLDIVAAQTVTWMG. Residues 493-513 traverse the membrane as a helical segment; sequence LFYCPLLPLLNSVFLFLTFYI. Residues 514-536 are Cytoplasmic-facing; that stretch reads KKYTLLRNSRASPRRFRASSSTF. The chain crosses the membrane as a helical span at residues 537 to 557; it reads FFHLVLLLGLLLAAVPLAYVI. At 558-598 the chain is on the lumenal side; sequence SSTHSSWDCGLFTNYSAPWQVVPELVALQLPLPSQRALRYL. A glycan (N-linked (GlcNAc...) asparagine) is linked at Asn-571. The helical transmembrane segment at 599–619 threads the bilayer; the sequence is SSHAFSFPLLILLSIVLTVCI. Topologically, residues 620–722 are cytoplasmic; it reads SQSRANARAI…RFHFPSRTEL (103 aa). Phosphoserine occurs at positions 658, 663, and 673. Positions 658 to 722 are disordered; the sequence is SPEPGSPHSR…RFHFPSRTEL (65 aa). A compositionally biased stretch (pro residues) spans 678 to 687; the sequence is FPCPGSPGPR. The span at 689–712 shows a compositional bias: low complexity; the sequence is PRLAPSNRLSSSSLGAPSASVPAS. Ser-698 bears the Phosphoserine mark.

This sequence belongs to the TMC family. As to quaternary structure, interacts with TMC6. Interacts and forms a complex with TMC6 and CIB1; the interaction stabilizes each component of the complex. Interacts and forms a complex with TMC6 and SLC30A1/ZNT1; the interaction regulates zinc transport into the ER. Interacts with TRADD; the interaction competes with TRADD/RIPK1/TRAF2/cIAPs complex I formation and facilites complex II formation. Expressed in thymus, lung, prostate, placenta, testis and spleen. Expressed in lymphocytes and peripheral lymphocytes.

It localises to the endoplasmic reticulum membrane. The protein localises to the golgi apparatus membrane. Its subcellular location is the nucleus membrane. Its function is as follows. Acts as a regulatory protein involved in the regulation of numerous cellular processes. Together with its homolog TMC6/EVER1, forms a complex with calcium-binding protein CIB1 in lymphocytes and keratynocytes where TMC6 and TMC8 stabilize CIB1 levels and reciprocally. Together with TMC6, also forms a complex with and activates zinc transporter ZNT1 at the ER membrane of keratynocytes, thereby facilitating zinc uptake into the ER. Also inhibits receptor-mediated calcium release from ER stores and calcium activated and volume regulated chloride channels. Down-regulates the activity of transcription factors induced by zinc and cytokines. Also sequesters TRADD which impairs the recruitment of TRAF2 and RIPK1 in the pro-survival complex I and promotes proapoptotic complex II formation, and may therefore be involved in TNF-induced cell death/survival decisions. This Mus musculus (Mouse) protein is Transmembrane channel-like protein 8.